A 139-amino-acid chain; its full sequence is Ribosomal RNA large subunit methyltransferase H (139 aa).

S-adenosyl-L-methionine contacts are provided by residues L57, G88, and 107–112 (LSAMTF).

The protein belongs to the RNA methyltransferase RlmH family. In terms of assembly, homodimer.

It localises to the cytoplasm. The enzyme catalyses pseudouridine(1915) in 23S rRNA + S-adenosyl-L-methionine = N(3)-methylpseudouridine(1915) in 23S rRNA + S-adenosyl-L-homocysteine + H(+). Its function is as follows. Specifically methylates the pseudouridine at position 1915 (m3Psi1915) in 23S rRNA. The polypeptide is Ribosomal RNA large subunit methyltransferase H (Solibacter usitatus (strain Ellin6076)).